Here is a 516-residue protein sequence, read N- to C-terminus: Replication factor C large subunit (516 aa).

44 to 51 is a binding site for ATP; the sequence is GAPGVGKT. The tract at residues 421-516 is disordered; the sequence is RSEAVEAHAG…DGQAGLSEFM (96 aa). The span at 454 to 467 shows a compositional bias: basic and acidic residues; it reads VQSHKSAESGDDTV. Low complexity predominate over residues 479-496; it reads QSGASETASATESASDSD. Residues 497-508 show a composition bias toward acidic residues; sequence ASTDTDADDDDG.

The protein belongs to the activator 1 small subunits family. RfcL subfamily. In terms of assembly, heteromultimer composed of small subunits (RfcS) and large subunits (RfcL).

Part of the RFC clamp loader complex which loads the PCNA sliding clamp onto DNA. The polypeptide is Replication factor C large subunit (Haloquadratum walsbyi (strain DSM 16790 / HBSQ001)).